The sequence spans 640 residues: Zinc finger protein 549 (640 aa).

Residues 27–140 form the KRAB domain; sequence VTFEDIAVYF…PYTSVASGKW (114 aa). Residues 217 to 241 form a C2H2-type 1; degenerate zinc finger; it reads FQQRRYKCEQVFNEKVHVTEHQRVH. K223 is covalently cross-linked (Glycyl lysine isopeptide (Lys-Gly) (interchain with G-Cter in SUMO2)). Residues 247–269 form a C2H2-type 2; degenerate zinc finger; it reads YKRREYGKSLNSKYLFVEHQRTH. 13 consecutive C2H2-type zinc fingers follow at residues 275–298, 304–326, 332–355, 361–383, 389–411, 417–439, 445–467, 473–495, 501–523, 529–551, 557–579, 585–607, and 613–635; these read YVCN…QRIH, YVCI…QRTH, YVCM…QRVH, YQCS…HRIH, YECK…QRIH, YVCI…QRIH, YECS…HKIH, YECS…QRIH, CECN…QKVH, CECS…QKVH, YNCT…QRIH, and YECG…QKVH.

The protein belongs to the krueppel C2H2-type zinc-finger protein family.

Its subcellular location is the nucleus. May be involved in transcriptional regulation. The chain is Zinc finger protein 549 (ZNF549) from Homo sapiens (Human).